The chain runs to 345 residues: Aminopeptidase YpdE (345 aa).

Residues H62 and D166 each coordinate a divalent metal cation. The active-site Proton acceptor is the E198. A divalent metal cation contacts are provided by E199, D221, and H308.

This sequence belongs to the peptidase M42 family. The cofactor is Co(2+). Requires Ni(2+) as cofactor. Mn(2+) is required as a cofactor. Cu(2+) serves as cofactor.

In terms of biological role, has a broad aminopeptidase activity on non-blocked peptides by progressively cleaving amino acids off the peptide substrate. Aminopeptidase activity stops at the residue before the first proline in the peptide. Cannot cleave when proline is the first N-terminal residue. The chain is Aminopeptidase YpdE (ypdE) from Escherichia coli (strain K12).